The chain runs to 1342 residues: Zinc finger protein 335 (1342 aa).

Disordered regions lie at residues 1-102 (MEEN…VTGG) and 201-228 (TSTS…AEEP). Low complexity predominate over residues 34–49 (AVSADSSDAAAAPGQA). Over residues 201 to 217 (TSTSTCLEAQGGPSSPV) the composition is skewed to polar residues. The C2H2-type 1 zinc finger occupies 245–268 (FKCKMCQYRSSTKATLLRHMRERH). A disordered region spans residues 274 to 442 (AAAAAAGKKG…TLPRRRGRPS (169 aa)). Residues 297–327 (EEGPEEEDDDDIVDAGAIDDLEEDSDYNPAE) show a composition bias toward acidic residues. The span at 346 to 357 (RPRRRPGRPRKL) shows a compositional bias: basic residues. 8 consecutive C2H2-type zinc fingers follow at residues 465 to 487 (FLCR…VNSH), 495 to 517 (FKCL…MFNH), 523 to 545 (YKCD…AAVH), 562 to 584 (FPCP…MKTH), 590 to 612 (HMCD…LLTH), 621 to 643 (FKCE…QLSH), 649 to 672 (FKCS…AVKH), and 678 to 701 (FACE…RCRH). Disordered regions lie at residues 732-763 (LKQQ…QSSE) and 964-1013 (CGGL…SAAT). A compositionally biased stretch (pro residues) spans 740-753 (PGPPPSSPGPPEIP). Phosphoserine is present on residues Ser976, Ser992, and Ser1007. The span at 986-997 (SQSSASSPPATS) shows a compositional bias: low complexity. 4 C2H2-type zinc fingers span residues 1019–1041 (FSCK…KRAH), 1047–1069 (FKCP…MAQH), 1075–1097 (HQCS…MLTH), and 1103–1126 (FACH…QRLH). Lys1022 participates in a covalent cross-link: Glycyl lysine isopeptide (Lys-Gly) (interchain with G-Cter in SUMO2). The interval 1041 to 1342 (HAGPGAFKCP…EYDVITLADD (302 aa)) is involved in the interaction with CCAR2. Position 1153 is a phosphoserine (Ser1153).

The protein belongs to the krueppel C2H2-type zinc-finger protein family. As to quaternary structure, interacts with NCOA6; may enhance ligand-dependent transcriptional activation by nuclear hormone receptors. Interacts with CNOT6. Interacts with CNOT9; the interaction is direct. Component of a nuclear receptor-mediated transcription complex composed of at least ZNF335, CCAR2 and EMSY; the complex stimulates the transcription of nuclear receptor target genes such as SOX9 and HOXA1. Within the complex interacts with EMSY and interacts (via C-terminus) with CCAR2. Interacts with members of histone H3'Lys4'(H3K4) methyltransferase complexes ASH2L, CXXC1, KMT2A/MLL1, RBBP5, SETD1A and WDR5. Component of a histone methylation complex composed of at least ZNF335, RBBP5, ASH2L and WDR5; the complex may have histone H3-specific methyltransferase activity, however does not have specificity for 'Lys-4' of histone H3. Interacts with RBBP5 and WDR5. Interacts with ASHL2. Components of this complex may associate with components of the ZNF335-CCAR2-EMSY nuclear receptor-mediated transcription complex to form a complex at least composed of ZNF335, HCFC1, CCAR2, EMSY, MKI67, RBBP5, ASH2L and WDR5. Within this complex also interacts with HCFC1 and MKI67. Ubiquitously expressed.

The protein localises to the nucleus. In terms of biological role, component or associated component of some histone methyltransferase complexes may regulate transcription through recruitment of those complexes on gene promoters. Enhances ligand-dependent transcriptional activation by nuclear hormone receptors. Plays an important role in neural progenitor cell proliferation and self-renewal through the regulation of specific genes involved brain development, including REST. Also controls the expression of genes involved in somatic development and regulates, for instance, lymphoblast proliferation. The polypeptide is Zinc finger protein 335 (ZNF335) (Homo sapiens (Human)).